The following is a 304-amino-acid chain: GMP synthase [glutamine-hydrolyzing] subunit B (304 aa).

Residues Val2 to Arg183 enclose the GMPS ATP-PPase domain. ATP is bound at residue Ser28–Ser34.

In terms of assembly, heterodimer composed of a glutamine amidotransferase subunit (A) and a GMP-binding subunit (B).

The catalysed reaction is XMP + L-glutamine + ATP + H2O = GMP + L-glutamate + AMP + diphosphate + 2 H(+). It functions in the pathway purine metabolism; GMP biosynthesis; GMP from XMP (L-Gln route): step 1/1. Its function is as follows. Catalyzes the synthesis of GMP from XMP. In Methanococcoides burtonii (strain DSM 6242 / NBRC 107633 / OCM 468 / ACE-M), this protein is GMP synthase [glutamine-hydrolyzing] subunit B.